Here is a 493-residue protein sequence, read N- to C-terminus: Trigger factor (493 aa).

In terms of domain architecture, PPIase FKBP-type spans 162-243 (GDFVSLDLSA…VRGVKEKELP (82 aa)). Positions 432–493 (ELALPARPAP…AAVDSGDRDI (62 aa)) are disordered. A compositionally biased stretch (basic and acidic residues) spans 449-470 (HAGHDHEGHDHADHAGHDHAGD). The span at 474–485 (AEPAEAPAATAA) shows a compositional bias: low complexity.

This sequence belongs to the FKBP-type PPIase family. Tig subfamily.

The protein resides in the cytoplasm. It carries out the reaction [protein]-peptidylproline (omega=180) = [protein]-peptidylproline (omega=0). Involved in protein export. Acts as a chaperone by maintaining the newly synthesized protein in an open conformation. Functions as a peptidyl-prolyl cis-trans isomerase. The protein is Trigger factor of Frankia alni (strain DSM 45986 / CECT 9034 / ACN14a).